Consider the following 191-residue polypeptide: Putative glutathione-dependent formaldehyde-activating enzyme (191 aa).

A CENP-V/GFA domain is found at 20 to 166 (FPGGNLYCKC…FHSLGLETYD (147 aa)). Zn(2+) contacts are provided by Cys-27, Cys-29, Cys-48, Cys-50, Cys-53, Cys-95, and Cys-98.

Belongs to the Gfa family. Requires Zn(2+) as cofactor.

It catalyses the reaction S-(hydroxymethyl)glutathione = glutathione + formaldehyde. The protein operates within one-carbon metabolism; formaldehyde degradation; formate from formaldehyde (glutathione route): step 1/3. Its function is as follows. Catalyzes the condensation of formaldehyde and glutathione to S-hydroxymethylglutathione. The chain is Putative glutathione-dependent formaldehyde-activating enzyme from Aspergillus niger (strain ATCC MYA-4892 / CBS 513.88 / FGSC A1513).